The following is a 62-amino-acid chain: UPF0291 protein CLB_2550 (62 aa).

Belongs to the UPF0291 family.

The protein localises to the cytoplasm. In Clostridium botulinum (strain ATCC 19397 / Type A), this protein is UPF0291 protein CLB_2550.